The chain runs to 143 residues: Nucleoside diphosphate kinase (143 aa).

Positions 11, 59, 87, 93, 104, and 114 each coordinate ATP. Residue H117 is the Pros-phosphohistidine intermediate of the active site.

The protein belongs to the NDK family. In terms of assembly, homotetramer. It depends on Mg(2+) as a cofactor.

It is found in the cytoplasm. The enzyme catalyses a 2'-deoxyribonucleoside 5'-diphosphate + ATP = a 2'-deoxyribonucleoside 5'-triphosphate + ADP. The catalysed reaction is a ribonucleoside 5'-diphosphate + ATP = a ribonucleoside 5'-triphosphate + ADP. Major role in the synthesis of nucleoside triphosphates other than ATP. The ATP gamma phosphate is transferred to the NDP beta phosphate via a ping-pong mechanism, using a phosphorylated active-site intermediate. This is Nucleoside diphosphate kinase from Shewanella loihica (strain ATCC BAA-1088 / PV-4).